The primary structure comprises 259 residues: Ubiquinone/menaquinone biosynthesis C-methyltransferase UbiE (259 aa).

Residues Thr82, Asp103, 131 to 132 (NA), and Ser148 each bind S-adenosyl-L-methionine.

This sequence belongs to the class I-like SAM-binding methyltransferase superfamily. MenG/UbiE family.

The enzyme catalyses a 2-demethylmenaquinol + S-adenosyl-L-methionine = a menaquinol + S-adenosyl-L-homocysteine + H(+). It catalyses the reaction a 2-methoxy-6-(all-trans-polyprenyl)benzene-1,4-diol + S-adenosyl-L-methionine = a 5-methoxy-2-methyl-3-(all-trans-polyprenyl)benzene-1,4-diol + S-adenosyl-L-homocysteine + H(+). Its pathway is quinol/quinone metabolism; menaquinone biosynthesis; menaquinol from 1,4-dihydroxy-2-naphthoate: step 2/2. The protein operates within cofactor biosynthesis; ubiquinone biosynthesis. Methyltransferase required for the conversion of demethylmenaquinol (DMKH2) to menaquinol (MKH2) and the conversion of 2-polyprenyl-6-methoxy-1,4-benzoquinol (DDMQH2) to 2-polyprenyl-3-methyl-6-methoxy-1,4-benzoquinol (DMQH2). The chain is Ubiquinone/menaquinone biosynthesis C-methyltransferase UbiE from Vibrio campbellii (strain ATCC BAA-1116).